The following is a 254-amino-acid chain: Type III pantothenate kinase 2 (254 aa).

6–13 (DMGNSHIH) lines the ATP pocket. Position 107–110 (107–110 (GADR)) interacts with substrate. D109 acts as the Proton acceptor in catalysis. D130 lines the K(+) pocket. T133 serves as a coordination point for ATP. T185 is a binding site for substrate.

It belongs to the type III pantothenate kinase family. As to quaternary structure, homodimer. NH4(+) is required as a cofactor. It depends on K(+) as a cofactor.

The protein resides in the cytoplasm. The enzyme catalyses (R)-pantothenate + ATP = (R)-4'-phosphopantothenate + ADP + H(+). The protein operates within cofactor biosynthesis; coenzyme A biosynthesis; CoA from (R)-pantothenate: step 1/5. Catalyzes the phosphorylation of pantothenate (Pan), the first step in CoA biosynthesis. The polypeptide is Type III pantothenate kinase 2 (Francisella tularensis subsp. holarctica (strain LVS)).